Reading from the N-terminus, the 233-residue chain is Cobalt-containing nitrile hydratase subunit beta (233 aa).

It belongs to the nitrile hydratase subunit beta family. As to quaternary structure, heterotetramer of two alpha and two beta chains.

It catalyses the reaction an aliphatic primary amide = an aliphatic nitrile + H2O. Functionally, NHase catalyzes the hydration of various nitrile compounds to the corresponding amides. This chain is Cobalt-containing nitrile hydratase subunit beta, found in Pseudonocardia thermophila.